Reading from the N-terminus, the 140-residue chain is Nucleoside diphosphate kinase (140 aa).

ATP contacts are provided by K11, F59, R87, T93, R104, and N114. H117 serves as the catalytic Pros-phosphohistidine intermediate.

It belongs to the NDK family. As to quaternary structure, homotetramer. The cofactor is Mg(2+).

The protein resides in the cytoplasm. It carries out the reaction a 2'-deoxyribonucleoside 5'-diphosphate + ATP = a 2'-deoxyribonucleoside 5'-triphosphate + ADP. It catalyses the reaction a ribonucleoside 5'-diphosphate + ATP = a ribonucleoside 5'-triphosphate + ADP. Major role in the synthesis of nucleoside triphosphates other than ATP. The ATP gamma phosphate is transferred to the NDP beta phosphate via a ping-pong mechanism, using a phosphorylated active-site intermediate. The sequence is that of Nucleoside diphosphate kinase from Paracoccus denitrificans (strain Pd 1222).